Here is a 193-residue protein sequence, read N- to C-terminus: Putative manganese efflux pump MntP (193 aa).

A run of 6 helical transmembrane segments spans residues 6-26, 41-61, 65-85, 107-127, 132-152, and 169-189; these read LLGL…AVGI, YHFG…GTGI, TQSY…ANMI, LIIL…SLSM, IWYP…FGML, and VLGG…NGVF.

This sequence belongs to the MntP (TC 9.B.29) family.

It is found in the cell inner membrane. Functionally, probably functions as a manganese efflux pump. In Desulfotalea psychrophila (strain LSv54 / DSM 12343), this protein is Putative manganese efflux pump MntP.